A 373-amino-acid polypeptide reads, in one-letter code: Dual-specificity RNA methyltransferase RlmN (373 aa).

The Proton acceptor role is filled by Glu-94. Residues 100–339 form the Radical SAM core domain; the sequence is EDDRATLCVS…VTIRKTRGDD (240 aa). The cysteines at positions 107 and 344 are disulfide-linked. Cys-114, Cys-118, and Cys-121 together coordinate [4Fe-4S] cluster. Residues 168 to 169, Ser-200, 222 to 224, and Asn-301 each bind S-adenosyl-L-methionine; these read GE and SLH. Residue Cys-344 is the S-methylcysteine intermediate of the active site.

It belongs to the radical SAM superfamily. RlmN family. It depends on [4Fe-4S] cluster as a cofactor.

The protein localises to the cytoplasm. It catalyses the reaction adenosine(2503) in 23S rRNA + 2 reduced [2Fe-2S]-[ferredoxin] + 2 S-adenosyl-L-methionine = 2-methyladenosine(2503) in 23S rRNA + 5'-deoxyadenosine + L-methionine + 2 oxidized [2Fe-2S]-[ferredoxin] + S-adenosyl-L-homocysteine. The enzyme catalyses adenosine(37) in tRNA + 2 reduced [2Fe-2S]-[ferredoxin] + 2 S-adenosyl-L-methionine = 2-methyladenosine(37) in tRNA + 5'-deoxyadenosine + L-methionine + 2 oxidized [2Fe-2S]-[ferredoxin] + S-adenosyl-L-homocysteine. Functionally, specifically methylates position 2 of adenine 2503 in 23S rRNA and position 2 of adenine 37 in tRNAs. m2A2503 modification seems to play a crucial role in the proofreading step occurring at the peptidyl transferase center and thus would serve to optimize ribosomal fidelity. This Vibrio cholerae serotype O1 (strain M66-2) protein is Dual-specificity RNA methyltransferase RlmN.